A 343-amino-acid chain; its full sequence is S-adenosylmethionine:tRNA ribosyltransferase-isomerase (343 aa).

Belongs to the QueA family. As to quaternary structure, monomer.

It localises to the cytoplasm. It carries out the reaction 7-aminomethyl-7-carbaguanosine(34) in tRNA + S-adenosyl-L-methionine = epoxyqueuosine(34) in tRNA + adenine + L-methionine + 2 H(+). The protein operates within tRNA modification; tRNA-queuosine biosynthesis. Transfers and isomerizes the ribose moiety from AdoMet to the 7-aminomethyl group of 7-deazaguanine (preQ1-tRNA) to give epoxyqueuosine (oQ-tRNA). In Pelobacter propionicus (strain DSM 2379 / NBRC 103807 / OttBd1), this protein is S-adenosylmethionine:tRNA ribosyltransferase-isomerase.